A 319-amino-acid chain; its full sequence is Alpha-hemolysin (319 aa).

Residues 1 to 26 form the signal peptide; that stretch reads MKTRIVSSVTTTLLLGSILMNPVANA.

This sequence belongs to the aerolysin family. As to quaternary structure, self-assembles to form first a non-lytic oligomeric intermediate and then, a mushroom-shaped homoheptamer structure of 100 Angstroms in length and up to 100 Angstroms in diameter.

The protein localises to the secreted. In terms of biological role, alpha-toxin binds to the membrane of eukaryotic cells resulting in the release of low-molecular weight molecules and leading to an eventual osmotic lysis. Inhibits host neutrophil chemotaxis to the lesion region. Heptamer oligomerization and pore formation is required for lytic activity. This Staphylococcus aureus (strain NCTC 8325 / PS 47) protein is Alpha-hemolysin (hly).